Here is a 450-residue protein sequence, read N- to C-terminus: uncharacterized protein (450 aa).

One can recognise a TRAM domain in the interval 1-58 (MAKGEIVTVKIEEMDFKGYGVGYCEGKPLKVRGGILGQRVAVRVKKGKKGRAEGEIVE). Residues Cys71, Cys77, Cys80, and Cys159 each coordinate [4Fe-4S] cluster. Residues Gln285, Tyr314, Glu335, and Asp380 each contribute to the S-adenosyl-L-methionine site. Cys407 serves as the catalytic Nucleophile.

The protein belongs to the class I-like SAM-binding methyltransferase superfamily. RNA M5U methyltransferase family.

This is an uncharacterized protein from Caldanaerobacter subterraneus subsp. tengcongensis (strain DSM 15242 / JCM 11007 / NBRC 100824 / MB4) (Thermoanaerobacter tengcongensis).